We begin with the raw amino-acid sequence, 89 residues long: Phosphocarrier protein HPr (89 aa).

The HPr domain occupies Met1 to Asp88. His15 (pros-phosphohistidine intermediate) is an active-site residue. At Ser46 the chain carries Phosphoserine; by HPrK/P.

Belongs to the HPr family.

It localises to the cytoplasm. Phosphorylation on Ser-46 inhibits the phosphoryl transfer from enzyme I to HPr. General (non sugar-specific) component of the phosphoenolpyruvate-dependent sugar phosphotransferase system (sugar PTS). This major carbohydrate active-transport system catalyzes the phosphorylation of incoming sugar substrates concomitantly with their translocation across the cell membrane. The phosphoryl group from phosphoenolpyruvate (PEP) is transferred to the phosphoryl carrier protein HPr by enzyme I. Phospho-HPr then transfers it to the PTS EIIA domain. This chain is Phosphocarrier protein HPr (ptsH), found in Xylella fastidiosa (strain 9a5c).